The following is a 384-amino-acid chain: S-adenosylmethionine synthase (384 aa).

H16 provides a ligand contact to ATP. Position 18 (D18) interacts with Mg(2+). Residue E44 participates in K(+) binding. L-methionine is bound by residues E57 and Q100. The flexible loop stretch occupies residues 100–110 (QSADIAMGVDE). Residues 165 to 167 (DAK), D240, 246 to 247 (RK), A263, and K267 contribute to the ATP site. D240 lines the L-methionine pocket. An L-methionine-binding site is contributed by K271.

Belongs to the AdoMet synthase family. Homotetramer; dimer of dimers. Mg(2+) is required as a cofactor. It depends on K(+) as a cofactor.

The protein resides in the cytoplasm. It carries out the reaction L-methionine + ATP + H2O = S-adenosyl-L-methionine + phosphate + diphosphate. Its pathway is amino-acid biosynthesis; S-adenosyl-L-methionine biosynthesis; S-adenosyl-L-methionine from L-methionine: step 1/1. Its function is as follows. Catalyzes the formation of S-adenosylmethionine (AdoMet) from methionine and ATP. The overall synthetic reaction is composed of two sequential steps, AdoMet formation and the subsequent tripolyphosphate hydrolysis which occurs prior to release of AdoMet from the enzyme. In Cellvibrio japonicus (strain Ueda107) (Pseudomonas fluorescens subsp. cellulosa), this protein is S-adenosylmethionine synthase.